A 469-amino-acid polypeptide reads, in one-letter code: Putative dipeptidase SE_1424 (469 aa).

Histidine 84 lines the Zn(2+) pocket. Aspartate 86 is a catalytic residue. A Zn(2+)-binding site is contributed by aspartate 115. The active-site Proton acceptor is glutamate 149. 3 residues coordinate Zn(2+): glutamate 150, aspartate 173, and histidine 440.

It belongs to the peptidase M20A family. Requires Zn(2+) as cofactor.

The chain is Putative dipeptidase SE_1424 from Staphylococcus epidermidis (strain ATCC 12228 / FDA PCI 1200).